Consider the following 164-residue polypeptide: UPF0114 protein YqhA (164 aa).

3 helical membrane passes run 15 to 35 (LLAP…LKFF), 53 to 73 (LILV…LVMV), and 136 to 156 (LMWY…MGYL).

Belongs to the UPF0114 family.

It localises to the cell membrane. This chain is UPF0114 protein YqhA, found in Escherichia coli O139:H28 (strain E24377A / ETEC).